The sequence spans 539 residues: Nucleobase-ascorbate transporter 8 (539 aa).

The disordered stretch occupies residues 1–20 (MAGDGVENAKPPQKQEDLQP). 12 helical membrane passes run 44 to 64 (ILLG…IPTM), 79 to 99 (LIQT…FFGT), 101 to 121 (LPAV…IVLA), 141 to 161 (IQGA…SGLW), 167 to 187 (FLSP…LYEQ), 189 to 209 (FPML…LVIF), 229 to 249 (FAVI…TIGG), 295 to 315 (IFAM…TYIA), 368 to 388 (VGSR…SILG), 399 to 421 (APIV…LSLI), 433 to 453 (FILG…YQYT), and 470 to 490 (NIIN…AFFL).

This sequence belongs to the nucleobase:cation symporter-2 (NCS2) (TC 2.A.40) family. As to expression, highly expressed in ovules, endosperm and embryo.

It is found in the cell membrane. The polypeptide is Nucleobase-ascorbate transporter 8 (NAT8) (Arabidopsis thaliana (Mouse-ear cress)).